Consider the following 207-residue polypeptide: Ribosomal RNA small subunit methyltransferase G (207 aa).

Residues glycine 76, glutamine 81, 127–128, and arginine 141 each bind S-adenosyl-L-methionine; that span reads VE.

Belongs to the methyltransferase superfamily. RNA methyltransferase RsmG family.

The protein localises to the cytoplasm. It carries out the reaction guanosine(527) in 16S rRNA + S-adenosyl-L-methionine = N(7)-methylguanosine(527) in 16S rRNA + S-adenosyl-L-homocysteine. Specifically methylates the N7 position of guanine in position 527 of 16S rRNA. The chain is Ribosomal RNA small subunit methyltransferase G from Neisseria meningitidis serogroup A / serotype 4A (strain DSM 15465 / Z2491).